A 629-amino-acid chain; its full sequence is 1-deoxy-D-xylulose-5-phosphate synthase (629 aa).

Thiamine diphosphate-binding positions include histidine 73 and 114-116 (GHA). Aspartate 145 is a binding site for Mg(2+). Residues 146-147 (GA), asparagine 174, tyrosine 284, and glutamate 360 each bind thiamine diphosphate. Asparagine 174 lines the Mg(2+) pocket.

It belongs to the transketolase family. DXPS subfamily. Homodimer. Requires Mg(2+) as cofactor. The cofactor is thiamine diphosphate.

The catalysed reaction is D-glyceraldehyde 3-phosphate + pyruvate + H(+) = 1-deoxy-D-xylulose 5-phosphate + CO2. It participates in metabolic intermediate biosynthesis; 1-deoxy-D-xylulose 5-phosphate biosynthesis; 1-deoxy-D-xylulose 5-phosphate from D-glyceraldehyde 3-phosphate and pyruvate: step 1/1. Catalyzes the acyloin condensation reaction between C atoms 2 and 3 of pyruvate and glyceraldehyde 3-phosphate to yield 1-deoxy-D-xylulose-5-phosphate (DXP). The protein is 1-deoxy-D-xylulose-5-phosphate synthase of Thermomicrobium roseum (strain ATCC 27502 / DSM 5159 / P-2).